The following is a 191-amino-acid chain: Calcium and integrin-binding protein 1 (191 aa).

G2 carries N-myristoyl glycine lipidation. 2 EF-hand domains span residues 103–138 and 148–183; these read TPDI…LTGE and EMKQ…SPDF. 10 residues coordinate Ca(2+): D116, D118, D120, T122, D127, D161, D163, D165, T167, and E172.

In terms of assembly, monomer. Interacts with the heterodimeric integrin alpha-IIb/beta3 (ITGA2B-ITGB3). Interacts with ITGA2B (via cytoplasmic domain); the interaction is direct and calcium-dependent. Interacts with the protein kinases PLK2/SNK and PRKDC (via the region immediately upstream of the kinase domain). Interacts with PLK3; the interaction inhibits PLK3 kinase activity. Interacts with PSEN2. Interacts (via C-terminus) with F8. Interacts with NBR1 (via C-terminus). Interacts with FEZ1 (via C-terminus). Interacts with UBR5 (via C-terminus); the interaction is sensitive to DNA damage, and may target CIB1 for ubiquitin-mediated degradation. Interacts with IFI6; the interaction is direct. Interacts with BCL2. Interacts with TAS1R2 (via C-terminus); the interaction is independent of the myristoylation state of CIB1. Interacts with ITPR3; the interaction occurs in a calcium dependent manner. Interacts with PTK2/FAK1. Interacts with MAP3K5; the interaction inhibits MAP3K5 activation by phosphorylation, and its subsequent interaction with TRAF2. Interacts (via C-terminal region) with STMN2 (via the N-terminal region); the interaction is direct, occurs in a calcium-dependent manner and attenuates the STMN2-induced neurite outgrowth inhibition. Interacts with SPHK1, the interaction occurs in a calcium-dependent manner. Interacts with ITGA2B (via C-terminal cytoplasmic tail); the interaction occurs upon platelet aggregation and is stabilized/increased in a calcium and magnesium-dependent manner. Interacts with PAK1 (via N-terminal region); the interaction is direct and occurs in a calcium-dependent manner. Interacts with RAC3 (via C-terminal region); the interaction induces their association with the cytoskeleton upon alpha-IIb/beta3 integrin-mediated adhesion. Interacts with ITGA5 and ITGAV. Interacts with MYO1C. Interacts with ITGA2B (via C-terminal cytoplasmic tail region). Interacts (via C-terminal region) with PPP3R1 isoform 1 and isoform 2; the interactions increase upon cardiomyocytes hypertrophy. Interacts with CACNA1C; the interaction increases upon cardiomyocytes hypertrophy. Interacts and forms a complex with TMC6 and TMC8; the interaction stabilizes each component of the complex. As to expression, expressed strongly in Sertoli cells, weakly in pachytene spermatocytes, round spermatids and condensing spermatids (at protein level). Expressed in testis. Expressed in cardiac myocytes and endothelial cells. Expressed in heart, liver, spleen, lung, kidney, brain and inner ear. In the inner ear, expressed in the vestibule, basilar membrane and spiral ganglion cells.

It localises to the membrane. The protein resides in the cell membrane. It is found in the sarcolemma. Its subcellular location is the apical cell membrane. The protein localises to the cell projection. It localises to the ruffle membrane. The protein resides in the filopodium tip. It is found in the growth cone. Its subcellular location is the lamellipodium. The protein localises to the cytoplasm. It localises to the cytoskeleton. The protein resides in the microtubule organizing center. It is found in the centrosome. Its subcellular location is the perinuclear region. The protein localises to the nucleus. It localises to the neuron projection. The protein resides in the perikaryon. Calcium-binding protein that plays a role in the regulation of numerous cellular processes, such as cell differentiation, cell division, cell proliferation, cell migration, thrombosis, angiogenesis, cardiac hypertrophy and apoptosis. Involved in bone marrow megakaryocyte differentiation by negatively regulating thrombopoietin-mediated signaling pathway. Participates in the endomitotic cell cycle of megakaryocyte, a form of mitosis in which both karyokinesis and cytokinesis are interrupted. Plays a role in integrin signaling by negatively regulating alpha-IIb/beta3 activation in thrombin-stimulated megakaryocytes preventing platelet aggregation. Up-regulates PTK2/FAK1 activity, and is also needed for the recruitment of PTK2/FAK1 to focal adhesions; it thus appears to play an important role in focal adhesion formation. Positively regulates cell migration on fibronectin in a CDC42-dependent manner, the effect being negatively regulated by PAK1. Functions as a negative regulator of stress activated MAP kinase (MAPK) signaling pathways. Down-regulates inositol 1,4,5-trisphosphate receptor-dependent calcium signaling. Involved in sphingosine kinase SPHK1 translocation to the plasma membrane in a N-myristoylation-dependent manner preventing TNF-alpha-induced apoptosis. Regulates serine/threonine-protein kinase PLK3 activity for proper completion of cell division progression. Plays a role in microtubule (MT) dynamics during neuronal development; disrupts the MT depolymerization activity of STMN2 attenuating NGF-induced neurite outgrowth and the MT reorganization at the edge of lamellipodia. Promotes cardiomyocyte hypertrophy via activation of the calcineurin/NFAT signaling pathway. Stimulates calcineurin PPP3R1 activity by mediating its anchoring to the sarcolemma. In ischemia-induced (pathological or adaptive) angiogenesis, stimulates endothelial cell proliferation, migration and microvessel formation by activating the PAK1 and ERK1/ERK2 signaling pathway. Also promotes cancer cell survival and proliferation. May regulate cell cycle and differentiation of spermatogenic germ cells, and/or differentiation of supporting Sertoli cells. Forms a complex with TMC6/EVER1 and TMC8/EVER2 in lymphocytes and keratynocytes where CIB1 stabilizes TMC6 and TMC8 levels and reciprocally. The sequence is that of Calcium and integrin-binding protein 1 (Cib1) from Mus musculus (Mouse).